Consider the following 411-residue polypeptide: Branched-chain-amino-acid aminotransferase, cytosolic (411 aa).

N6-(pyridoxal phosphate)lysine is present on K247.

Belongs to the class-IV pyridoxal-phosphate-dependent aminotransferase family. Homodimer. Requires pyridoxal 5'-phosphate as cofactor. Post-translationally, the N-terminus is blocked. Brain, low expression in ovary and placenta, but not found in liver, kidney, and skeletal muscle.

It is found in the cytoplasm. The enzyme catalyses L-leucine + 2-oxoglutarate = 4-methyl-2-oxopentanoate + L-glutamate. It catalyses the reaction L-isoleucine + 2-oxoglutarate = (S)-3-methyl-2-oxopentanoate + L-glutamate. The catalysed reaction is L-valine + 2-oxoglutarate = 3-methyl-2-oxobutanoate + L-glutamate. Functionally, catalyzes the first reaction in the catabolism of the essential branched chain amino acids leucine, isoleucine, and valine. The chain is Branched-chain-amino-acid aminotransferase, cytosolic (Bcat1) from Rattus norvegicus (Rat).